The following is a 120-amino-acid chain: Small ribosomal subunit protein uS13 (120 aa).

Residues 92–120 form a disordered region; the sequence is HRKGLPVRGQTTKNNARTRKGKKKTVGSK. The span at 107–120 shows a compositional bias: basic residues; the sequence is ARTRKGKKKTVGSK.

It belongs to the universal ribosomal protein uS13 family. Part of the 30S ribosomal subunit. Forms a loose heterodimer with protein S19. Forms two bridges to the 50S subunit in the 70S ribosome.

Its function is as follows. Located at the top of the head of the 30S subunit, it contacts several helices of the 16S rRNA. In the 70S ribosome it contacts the 23S rRNA (bridge B1a) and protein L5 of the 50S subunit (bridge B1b), connecting the 2 subunits; these bridges are implicated in subunit movement. Contacts the tRNAs in the A and P-sites. This chain is Small ribosomal subunit protein uS13, found in Helicobacter pylori (strain J99 / ATCC 700824) (Campylobacter pylori J99).